Reading from the N-terminus, the 405-residue chain is Alpha-N-acetylgalactosaminidase (405 aa).

Disulfide bonds link cysteine 21/cysteine 63, cysteine 25/cysteine 32, and cysteine 111/cysteine 142. Residues 61–62 and lysine 138 contribute to the substrate site; that span reads DD. The active-site Nucleophile is aspartate 140. Asparagine 161 is a glycosylation site (N-linked (GlcNAc...) asparagine). The cysteines at positions 171 and 193 are disulfide-linked. Residue serine 172 coordinates substrate. An N-linked (GlcNAc...) asparagine glycan is attached at asparagine 185. 2 residues coordinate substrate: arginine 197 and aspartate 201. Aspartate 201 functions as the Proton donor in the catalytic mechanism. Asparagine 369 carries N-linked (GlcNAc...) asparagine glycosylation.

It belongs to the glycosyl hydrolase 27 family. In terms of assembly, homodimer.

It localises to the lysosome. The catalysed reaction is Cleavage of non-reducing alpha-(1-&gt;3)-N-acetylgalactosamine residues from human blood group A and AB mucin glycoproteins, Forssman hapten and blood group A lacto series glycolipids.. The enzyme catalyses a neolactoside IV(3)-alpha-GalNAc,IV(2)-alpha-Fuc-nLc4Cer(d18:1(4E)) + H2O = a neolactoside IV(2)-alpha-Fuc-nLc4Cer(d18:1(4E)) + N-acetyl-alpha-D-galactosamine. It carries out the reaction a neolactoside IV(3)-alpha-GalNAc,IV(2)-alpha-Fuc-nLc4Cer(d18:0) + H2O = a neolactoside IV(2)-alpha-Fuc-nLc4Cer(d18:0) + N-acetyl-alpha-D-galactosamine. It catalyses the reaction a globoside IV3GalNAc-Gb4Cer + H2O = N-acetyl-alpha-D-galactosamine + a globoside Gb4Cer. Its function is as follows. Removes terminal alpha-N-acetylgalactosamine residues from glycolipids and glycopeptides. Required for the breakdown of glycolipids. This chain is Alpha-N-acetylgalactosaminidase (NAGA), found in Gallus gallus (Chicken).